Reading from the N-terminus, the 292-residue chain is ATP synthase gamma chain (292 aa).

It belongs to the ATPase gamma chain family. F-type ATPases have 2 components, CF(1) - the catalytic core - and CF(0) - the membrane proton channel. CF(1) has five subunits: alpha(3), beta(3), gamma(1), delta(1), epsilon(1). CF(0) has three main subunits: a, b and c.

The protein resides in the cell inner membrane. In terms of biological role, produces ATP from ADP in the presence of a proton gradient across the membrane. The gamma chain is believed to be important in regulating ATPase activity and the flow of protons through the CF(0) complex. This Nautilia profundicola (strain ATCC BAA-1463 / DSM 18972 / AmH) protein is ATP synthase gamma chain.